The following is a 93-amino-acid chain: Small ribosomal subunit protein bS20c (93 aa).

The protein belongs to the bacterial ribosomal protein bS20 family.

The protein resides in the plastid. It is found in the chloroplast. In terms of biological role, binds directly to 16S ribosomal RNA. The polypeptide is Small ribosomal subunit protein bS20c (Trieres chinensis (Marine centric diatom)).